Here is a 150-residue protein sequence, read N- to C-terminus: Putative flagella-related protein G (150 aa).

A helical transmembrane segment spans residues 9–29 (IILFVSVLIITAAVSGILATS).

This sequence belongs to the archaeal FlaG family.

Its subcellular location is the cell membrane. The protein localises to the archaeal flagellum. The chain is Putative flagella-related protein G (flaG) from Methanococcus voltae.